The primary structure comprises 688 residues: Protein adenylyltransferase SelO, mitochondrial (688 aa).

The transit peptide at 1 to 23 (MGEKRTIIKALKNSAASHFIKKL) directs the protein to the mitochondrion. Residues glycine 132, glycine 134, arginine 135, lysine 156, aspartate 168, glycine 169, arginine 220, and arginine 227 each coordinate ATP. Catalysis depends on aspartate 338, which acts as the Proton acceptor. The Mg(2+) site is built by asparagine 339 and aspartate 348. ATP is bound at residue aspartate 348.

The protein belongs to the SELO family. Mg(2+) is required as a cofactor. Post-translationally, forms probably one or more intrachain disulfide bridges.

The protein localises to the mitochondrion. The catalysed reaction is L-tyrosyl-[protein] + ATP = O-(5'-adenylyl)-L-tyrosyl-[protein] + diphosphate. In terms of biological role, catalyzes the transfer of adenosine 5'-monophosphate (AMP) to Tyr residues of target mitochondrial proteins (AMPylation). Involved in redox homeostasis by regulating the cellular response to oxidative stress. Regulates protein S-glutathionylation levels possibly by AMPylation of deglutathionylation enzymes such as glutaredoxins. The chain is Protein adenylyltransferase SelO, mitochondrial from Saccharomyces cerevisiae (strain ATCC 204508 / S288c) (Baker's yeast).